Reading from the N-terminus, the 433-residue chain is Serine hydroxymethyltransferase (433 aa).

121-123 (AHV) provides a ligand contact to (6S)-5,6,7,8-tetrahydrofolate. The residue at position 227 (Lys227) is an N6-(pyridoxal phosphate)lysine. Glu243 is a (6S)-5,6,7,8-tetrahydrofolate binding site.

The protein belongs to the SHMT family. In terms of assembly, homodimer. Pyridoxal 5'-phosphate serves as cofactor.

The protein resides in the cytoplasm. It functions in the pathway amino-acid biosynthesis; glycine biosynthesis; glycine from L-serine: step 1/1. In terms of biological role, catalyzes the reversible interconversion of serine and glycine with a modified folate serving as the one-carbon carrier. Also exhibits a pteridine-independent aldolase activity toward beta-hydroxyamino acids, producing glycine and aldehydes, via a retro-aldol mechanism. This Saccharolobus islandicus (strain L.S.2.15 / Lassen #1) (Sulfolobus islandicus) protein is Serine hydroxymethyltransferase.